Reading from the N-terminus, the 451-residue chain is Signal recognition particle protein (451 aa).

GTP contacts are provided by residues 107-114, 190-194, and 248-251; these read GLQGSGKT, DTAGR, and TKTD.

Belongs to the GTP-binding SRP family. SRP54 subfamily. Part of the signal recognition particle protein translocation system, which is composed of SRP and FtsY. SRP is a ribonucleoprotein composed of Ffh and a 4.5S RNA molecule.

It is found in the cytoplasm. It catalyses the reaction GTP + H2O = GDP + phosphate + H(+). Involved in targeting and insertion of nascent membrane proteins into the cytoplasmic membrane. Binds to the hydrophobic signal sequence of the ribosome-nascent chain (RNC) as it emerges from the ribosomes. The SRP-RNC complex is then targeted to the cytoplasmic membrane where it interacts with the SRP receptor FtsY. Interaction with FtsY leads to the transfer of the RNC complex to the Sec translocase for insertion into the membrane, the hydrolysis of GTP by both Ffh and FtsY, and the dissociation of the SRP-FtsY complex into the individual components. This chain is Signal recognition particle protein, found in Buchnera aphidicola subsp. Acyrthosiphon pisum (strain APS) (Acyrthosiphon pisum symbiotic bacterium).